A 491-amino-acid polypeptide reads, in one-letter code: Cytochrome P450 2B2 (491 aa).

S128 is subject to Phosphoserine; by PKA. C436 contributes to the heme binding site.

The protein belongs to the cytochrome P450 family. Heme serves as cofactor. Phosphorylation is accompanied by a decrease in enzyme activity.

It is found in the endoplasmic reticulum membrane. It localises to the microsome membrane. It catalyses the reaction an organic molecule + reduced [NADPH--hemoprotein reductase] + O2 = an alcohol + oxidized [NADPH--hemoprotein reductase] + H2O + H(+). Its function is as follows. Cytochromes P450 are a group of heme-thiolate monooxygenases. In liver microsomes, this enzyme is involved in an NADPH-dependent electron transport pathway. It oxidizes a variety of structurally unrelated compounds, including steroids, fatty acids, and xenobiotics. The sequence is that of Cytochrome P450 2B2 (Cyp2b2) from Rattus norvegicus (Rat).